The following is a 201-amino-acid chain: 3-isopropylmalate dehydratase small subunit (201 aa).

Belongs to the LeuD family. LeuD type 1 subfamily. Heterodimer of LeuC and LeuD.

It carries out the reaction (2R,3S)-3-isopropylmalate = (2S)-2-isopropylmalate. It participates in amino-acid biosynthesis; L-leucine biosynthesis; L-leucine from 3-methyl-2-oxobutanoate: step 2/4. Catalyzes the isomerization between 2-isopropylmalate and 3-isopropylmalate, via the formation of 2-isopropylmaleate. This Shewanella frigidimarina (strain NCIMB 400) protein is 3-isopropylmalate dehydratase small subunit.